A 231-amino-acid chain; its full sequence is NKG2-C type II integral membrane protein (231 aa).

Residues Met1–Ser12 show a composition bias toward polar residues. The interval Met1 to Ile31 is disordered. The Cytoplasmic segment spans residues Met1–Lys70. Residues Asp16–Lys28 are compositionally biased toward basic and acidic residues. The helical; Signal-anchor for type II membrane protein transmembrane segment at Leu71–Leu93 threads the bilayer. Topologically, residues Ile94 to Leu231 are extracellular. Asn100 is a glycosylation site (N-linked (GlcNAc...) asparagine). The 114-residue stretch at His116–His229 folds into the C-type lectin domain. Disulfide bonds link Cys117–Cys128, Cys145–Cys227, and Cys206–Cys219. N-linked (GlcNAc...) asparagine glycosylation occurs at Asn149.

As to quaternary structure, heterodimer with KLRD1; disulfide-linked. KLRD1-KLRC2 receptor complex interacts with TYROBP/DAP12 homodimer; this interaction is necessary for the expression on the cell surface. Natural killer cells.

The protein resides in the cell membrane. In terms of biological role, immune activating receptor involved in self-nonself discrimination. In complex with KLRD1 on cytotoxic lymphocyte subsets, recognizes non-classical major histocompatibility MHC-E loaded with signal sequence-derived peptides from non-classical MHC-G molecules, likely playing a role in the generation and effector functions of adaptive natural killer (NK) cells and in maternal-fetal tolerance during pregnancy. Regulates the effector functions of terminally differentiated cytotoxic lymphocyte subsets, and in particular may play a role in adaptive NK cell response to viral infection. Upon MHC-E-peptide binding, transmits intracellular signals via the adapter protein TYROBP/DAP12, triggering the phosphorylation of proximal signaling molecules and cell activation. The polypeptide is NKG2-C type II integral membrane protein (KLRC2) (Macaca mulatta (Rhesus macaque)).